A 108-amino-acid chain; its full sequence is UPF0060 membrane protein YnfA (108 aa).

Residues 1–5 lie on the Periplasmic side of the membrane; the sequence is MIKTT. Residues 6 to 26 form a helical membrane-spanning segment; the sequence is LLFFATALCEIIGCFLPWLWL. Residues 27–30 are Cytoplasmic-facing; it reads KRNA. A helical membrane pass occupies residues 31-51; it reads SIWLLLPAGISLALFVWLLTL. Residues 52-60 are Periplasmic-facing; that stretch reads HPAASGRVY. A helical membrane pass occupies residues 61 to 81; it reads AAYGGVYVCTALIWLRVVDGV. Over 82 to 84 the chain is Cytoplasmic; the sequence is KLS. The chain crosses the membrane as a helical span at residues 85-105; sequence LYDWTGALIALCGMLIIVAGW. Topologically, residues 106-108 are periplasmic; the sequence is GRT.

This sequence belongs to the UPF0060 family.

Its subcellular location is the cell inner membrane. In Escherichia coli (strain SMS-3-5 / SECEC), this protein is UPF0060 membrane protein YnfA.